Reading from the N-terminus, the 214-residue chain is cAMP-activated global transcriptional regulator Vfr (214 aa).

3',5'-cyclic AMP is bound by residues 59-60 (RE), 73-75 (GEL), 87-88 (RS), 132-133 (TT), Arg-179, and Arg-185. The HTH crp-type domain occupies 142–214 (LDVTGRVART…GKTMVVFGTR (73 aa)). The H-T-H motif DNA-binding region spans 174–193 (RQEIGRIVGCSREMVGRVLK).

In terms of assembly, homodimer.

Global cAMP-dependent transcriptional regulator that controls virulence gene expression by distinct cAMP-dependent and -independent mechanisms, which allow to fine tune its virulence program in response to specific host cues or environments. Controls the expression of many regulatory targets including type II, type III and type IV secretion systems, flagellar-mediated motility, and quorum sensing systems. Transcriptional control is exerted by binding to a well-characterized consensus site (5'-ANWWTGNGAWNYAGWTCACAT) within target promoters. Directly binds to the toxA upstream region to regulate exotoxin A production, to the lasR gene promoter to activate the las quorum-sensing system or to the exsA promoter to regulate type III secretion system. Autoregulates as well its own expression. This is cAMP-activated global transcriptional regulator Vfr (vfr) from Pseudomonas aeruginosa (strain ATCC 15692 / DSM 22644 / CIP 104116 / JCM 14847 / LMG 12228 / 1C / PRS 101 / PAO1).